Consider the following 790-residue polypeptide: Accumulates dyads protein 3 (790 aa).

Residues 8–122 form a disordered region; it reads LNKPESLKEQ…NTLKSPNKFL (115 aa). The segment covering 39–49 has biased composition (basic and acidic residues); the sequence is PESKPFRERRS. 2 stretches are compositionally biased toward polar residues: residues 50–78 and 89–108; these read QTWI…ISKL and ESWA…TLEN. Coiled coils occupy residues 241 to 328, 361 to 430, 477 to 498, and 540 to 658; these read ISKE…REEK, LVSE…RLND, KNLE…LEKN, and QQFR…LKKL.

In terms of assembly, interacts directly with SSP1. Probable component of a SPB complex composed of ADY3, SSP1, DON1, MPC54, SPO21/MPC70, NUD1 and CNM67. Post-translationally, phosphorylated.

The protein localises to the prospore membrane. Its subcellular location is the cytoplasm. The protein resides in the cytoskeleton. It is found in the microtubule organizing center. It localises to the spindle pole body. In terms of biological role, involved in the pathway that organizes the prospore membrane (PSM) during sporulation. Mediates the assembly of the DON1 ring structure at the leading edge of PSM during meiosis II. May constitute a physical link between SSP1-containing PSM precursors and the spindle pole body (SPB) and may facilitate the recruitment of other factors that are required to promote spore wall formation. This is Accumulates dyads protein 3 (ADY3) from Saccharomyces cerevisiae (strain ATCC 204508 / S288c) (Baker's yeast).